The following is a 434-amino-acid chain: Alpha-enolase (434 aa).

Ser40 is a Mg(2+) binding site. Residues His158 and Glu167 each contribute to the substrate site. Catalysis depends on Glu210, which acts as the Proton donor. The Mg(2+) site is built by Asp245, Glu293, and Asp318. Substrate is bound by residues Glu293 and Asp318. Residue Lys343 is the Proton acceptor of the active site. Substrate is bound by residues 370–373 (SHRS) and Lys394.

This sequence belongs to the enolase family. In terms of assembly, homodimer. Mg(2+) serves as cofactor.

Its subcellular location is the cytoplasm. It carries out the reaction (2R)-2-phosphoglycerate = phosphoenolpyruvate + H2O. Its pathway is carbohydrate degradation; glycolysis; pyruvate from D-glyceraldehyde 3-phosphate: step 4/5. The chain is Alpha-enolase from Sceloporus undulatus (Eastern fence lizard).